The following is a 329-amino-acid chain: Tetraacyldisaccharide 4'-kinase (329 aa).

57–64 (TAGGSGKT) contacts ATP.

Belongs to the LpxK family.

It catalyses the reaction a lipid A disaccharide + ATP = a lipid IVA + ADP + H(+). It functions in the pathway glycolipid biosynthesis; lipid IV(A) biosynthesis; lipid IV(A) from (3R)-3-hydroxytetradecanoyl-[acyl-carrier-protein] and UDP-N-acetyl-alpha-D-glucosamine: step 6/6. Functionally, transfers the gamma-phosphate of ATP to the 4'-position of a tetraacyldisaccharide 1-phosphate intermediate (termed DS-1-P) to form tetraacyldisaccharide 1,4'-bis-phosphate (lipid IVA). The chain is Tetraacyldisaccharide 4'-kinase from Thiobacillus denitrificans (strain ATCC 25259 / T1).